The following is a 64-amino-acid chain: Large ribosomal subunit protein bL32 (64 aa).

A disordered region spans residues 1-35; sequence MAVQKSRVTPSRRGQRRSHDALTAKQLSTDPTSGE.

Belongs to the bacterial ribosomal protein bL32 family.

This is Large ribosomal subunit protein bL32 from Xanthomonas campestris pv. campestris (strain 8004).